Reading from the N-terminus, the 335-residue chain is Glyceraldehyde-3-phosphate dehydrogenase (335 aa).

Residues 13–14 (TI) and glycine 111 each bind NAD(+). 140–142 (SCN) contributes to the D-glyceraldehyde 3-phosphate binding site. The Nucleophile role is filled by cysteine 141. Position 169 (arginine 169) interacts with NAD(+). Position 195–196 (195–196 (HG)) interacts with D-glyceraldehyde 3-phosphate. Glutamine 300 is an NAD(+) binding site.

This sequence belongs to the glyceraldehyde-3-phosphate dehydrogenase family. Homotetramer.

It localises to the cytoplasm. It catalyses the reaction D-glyceraldehyde 3-phosphate + phosphate + NADP(+) = (2R)-3-phospho-glyceroyl phosphate + NADPH + H(+). The catalysed reaction is D-glyceraldehyde 3-phosphate + phosphate + NAD(+) = (2R)-3-phospho-glyceroyl phosphate + NADH + H(+). The protein operates within carbohydrate degradation; glycolysis; pyruvate from D-glyceraldehyde 3-phosphate: step 1/5. The polypeptide is Glyceraldehyde-3-phosphate dehydrogenase (Methanococcoides burtonii (strain DSM 6242 / NBRC 107633 / OCM 468 / ACE-M)).